A 399-amino-acid chain; its full sequence is Beta sliding clamp (399 aa).

It belongs to the beta sliding clamp family. Forms a ring-shaped head-to-tail homodimer around DNA which binds and tethers DNA polymerases and other proteins to the DNA. The DNA replisome complex has a single clamp-loading complex (3 tau and 1 each of delta, delta', psi and chi subunits) which binds 3 Pol III cores (1 core on the leading strand and 2 on the lagging strand) each with a beta sliding clamp dimer. Additional proteins in the replisome are other copies of gamma, psi and chi, Ssb, DNA helicase and RNA primase.

It is found in the cytoplasm. Confers DNA tethering and processivity to DNA polymerases and other proteins. Acts as a clamp, forming a ring around DNA (a reaction catalyzed by the clamp-loading complex) which diffuses in an ATP-independent manner freely and bidirectionally along dsDNA. Initially characterized for its ability to contact the catalytic subunit of DNA polymerase III (Pol III), a complex, multichain enzyme responsible for most of the replicative synthesis in bacteria; Pol III exhibits 3'-5' exonuclease proofreading activity. The beta chain is required for initiation of replication as well as for processivity of DNA replication. This chain is Beta sliding clamp (dnaN), found in Mycolicibacterium paratuberculosis (strain ATCC BAA-968 / K-10) (Mycobacterium paratuberculosis).